Consider the following 225-residue polypeptide: Cytidylate kinase (225 aa).

12 to 20 is a binding site for ATP; the sequence is GPSGAGKGT.

The protein belongs to the cytidylate kinase family. Type 1 subfamily.

It is found in the cytoplasm. The catalysed reaction is CMP + ATP = CDP + ADP. It carries out the reaction dCMP + ATP = dCDP + ADP. The protein is Cytidylate kinase of Stenotrophomonas maltophilia (strain K279a).